A 101-amino-acid polypeptide reads, in one-letter code: Small ribosomal subunit protein uS14 (101 aa).

This sequence belongs to the universal ribosomal protein uS14 family. As to quaternary structure, part of the 30S ribosomal subunit. Contacts proteins S3 and S10.

In terms of biological role, binds 16S rRNA, required for the assembly of 30S particles and may also be responsible for determining the conformation of the 16S rRNA at the A site. This chain is Small ribosomal subunit protein uS14, found in Acinetobacter baumannii (strain AB307-0294).